The primary structure comprises 437 residues: Ribosomal protein uS12 methylthiotransferase RimO (437 aa).

The MTTase N-terminal domain maps to 5–116 (PTISVSHLGC…IAEVIQRVET (112 aa)). [4Fe-4S] cluster contacts are provided by cysteine 14, cysteine 50, cysteine 79, cysteine 154, cysteine 158, and cysteine 161. Positions 140 to 369 (TTNEAVAYLR…MEIQQPIAAK (230 aa)) constitute a Radical SAM core domain. The TRAM domain occupies 372 to 437 (QKCVGQTVEV…DVYDLYGKVI (66 aa)).

The protein belongs to the methylthiotransferase family. RimO subfamily. The cofactor is [4Fe-4S] cluster.

The protein localises to the cytoplasm. The catalysed reaction is L-aspartate(89)-[ribosomal protein uS12]-hydrogen + (sulfur carrier)-SH + AH2 + 2 S-adenosyl-L-methionine = 3-methylsulfanyl-L-aspartate(89)-[ribosomal protein uS12]-hydrogen + (sulfur carrier)-H + 5'-deoxyadenosine + L-methionine + A + S-adenosyl-L-homocysteine + 2 H(+). Catalyzes the methylthiolation of an aspartic acid residue of ribosomal protein uS12. In Crocosphaera subtropica (strain ATCC 51142 / BH68) (Cyanothece sp. (strain ATCC 51142)), this protein is Ribosomal protein uS12 methylthiotransferase RimO.